Reading from the N-terminus, the 1552-residue chain is Nonribosomal peptide synthetase acrB (1552 aa).

A condensation region spans residues 129-564 (ASFAQERIWF…PVANLAIFDE (436 aa)). An adenylation region spans residues 594–999 (RHCKAHPRDV…RMEGSAQVKI (406 aa)). Residues 1110 to 1186 (APLGVEEEVM…AMARLLQPQE (77 aa)) form the Carrier domain. An O-(pantetheine 4'-phosphoryl)serine modification is found at Ser1146. Residues 1226 to 1464 (LTGATGFLGR…DFVGVDAVAS (239 aa)) form a thiolester reductase (R) domain region.

This sequence belongs to the NRP synthetase family.

It functions in the pathway secondary metabolite biosynthesis. Functionally, nonribosomal peptide synthetase; part of the cluster that mediates the biosynthesis of acurin A, a highly reduced polyketide coupled to a serine via a peptide bond. The activities of the highly reducing polyketide synthase acrA and the nonribosomal peptide synthetase acrB are collectively responsible for the synthesis of the acurin A core structure with a heptaketide backbone produced by acrA covalently fused to a L-serine by acrB. After the formation of the PK-NRP hybrid product, it is detached from acrB by reductive release to set up the formation of the lactam ring by aldol condensation. The hydrolyase acrC then catalyzes water loss to generate a double bond in the ring. This double bond is probably reduced, which is followed by three oxidations at C-22 to generate the carboxylic acid moiety, involving probably the FAD-binding monooxygenase acrE and the cytochrome P450 monooxygenases acrD and acrF. Finally, a last methylation step performed by the O-methyltransferase acrG leads to the production of acurin A. This chain is Nonribosomal peptide synthetase acrB, found in Aspergillus aculeatus (strain ATCC 16872 / CBS 172.66 / WB 5094).